The chain runs to 262 residues: Outer membrane protein assembly factor BamD (262 aa).

The first 18 residues, 1-18, serve as a signal peptide directing secretion; it reads MRKIKSLALLAVAALVIG. Cysteine 19 is lipidated: N-palmitoyl cysteine. Cysteine 19 is lipidated: S-diacylglycerol cysteine.

The protein belongs to the BamD family. Part of the Bam complex.

The protein localises to the cell outer membrane. Functionally, part of the outer membrane protein assembly complex, which is involved in assembly and insertion of beta-barrel proteins into the outer membrane. This Haemophilus influenzae (strain ATCC 51907 / DSM 11121 / KW20 / Rd) protein is Outer membrane protein assembly factor BamD.